We begin with the raw amino-acid sequence, 420 residues long: 3-isopropylmalate dehydratase large subunit (420 aa).

[4Fe-4S] cluster is bound by residues cysteine 300, cysteine 360, and cysteine 363.

Belongs to the aconitase/IPM isomerase family. LeuC type 2 subfamily. In terms of assembly, heterodimer of LeuC and LeuD. It depends on [4Fe-4S] cluster as a cofactor.

It carries out the reaction (2R,3S)-3-isopropylmalate = (2S)-2-isopropylmalate. Its pathway is amino-acid biosynthesis; L-leucine biosynthesis; L-leucine from 3-methyl-2-oxobutanoate: step 2/4. Its function is as follows. Catalyzes the isomerization between 2-isopropylmalate and 3-isopropylmalate, via the formation of 2-isopropylmaleate. The sequence is that of 3-isopropylmalate dehydratase large subunit from Clostridium kluyveri (strain ATCC 8527 / DSM 555 / NBRC 12016 / NCIMB 10680 / K1).